Consider the following 240-residue polypeptide: uncharacterized protein (240 aa).

The tract at residues 93 to 160 (QEASGCTVGE…AGGGAAASGQ (68 aa)) is disordered. Low complexity-rich tracts occupy residues 110 to 119 (AQPSQPAQGG) and 129 to 150 (GGAEEAGGAQASQPAESAPAEN).

This is an uncharacterized protein from Streptomyces viridochromogenes.